The following is a 31-amino-acid chain: Cytochrome b6-f complex subunit 6 (31 aa).

The chain crosses the membrane as a helical span at residues 4-24 (ITSYFGFLLAALTITSALFIG).

It belongs to the PetL family. As to quaternary structure, the 4 large subunits of the cytochrome b6-f complex are cytochrome b6, subunit IV (17 kDa polypeptide, PetD), cytochrome f and the Rieske protein, while the 4 small subunits are PetG, PetL, PetM and PetN. The complex functions as a dimer.

The protein localises to the plastid. It localises to the chloroplast thylakoid membrane. Its function is as follows. Component of the cytochrome b6-f complex, which mediates electron transfer between photosystem II (PSII) and photosystem I (PSI), cyclic electron flow around PSI, and state transitions. PetL is important for photoautotrophic growth as well as for electron transfer efficiency and stability of the cytochrome b6-f complex. This chain is Cytochrome b6-f complex subunit 6, found in Coffea arabica (Arabian coffee).